Reading from the N-terminus, the 402-residue chain is Nodulation protein E (402 aa).

The 400-residue stretch at 2 to 401 (DRRVVITGMG…GTNAVLAFKQ (400 aa)) folds into the Ketosynthase family 3 (KS3) domain. Catalysis depends on for beta-ketoacyl synthase activity residues C162, H294, and H331. A helical membrane pass occupies residues 329 to 348 (HAHCIGAASALEMIACVMAI).

It belongs to the thiolase-like superfamily. Beta-ketoacyl-ACP synthases family.

Its subcellular location is the cell inner membrane. In terms of biological role, proposed to synthesize NOD factor fatty acyl chain. Involved in the synthesis of a highly unsaturated fatty acid moiety, which forms part of a lipo-oligosaccharide that is responsible for host specificity. The sequence is that of Nodulation protein E (nodE) from Rhizobium meliloti (strain 1021) (Ensifer meliloti).